A 143-amino-acid polypeptide reads, in one-letter code: Large ribosomal subunit protein uL11 (143 aa).

The protein belongs to the universal ribosomal protein uL11 family. In terms of assembly, part of the ribosomal stalk of the 50S ribosomal subunit. Interacts with L10 and the large rRNA to form the base of the stalk. L10 forms an elongated spine to which L12 dimers bind in a sequential fashion forming a multimeric L10(L12)X complex. One or more lysine residues are methylated.

In terms of biological role, forms part of the ribosomal stalk which helps the ribosome interact with GTP-bound translation factors. This chain is Large ribosomal subunit protein uL11, found in Verminephrobacter eiseniae (strain EF01-2).